A 550-amino-acid polypeptide reads, in one-letter code: (S)-beta-bisabolene synthase (550 aa).

Mg(2+) contacts are provided by Asp303, Asp307, Ser451, and Glu455. The DDXXD motif signature appears at 303 to 307; sequence DDTYD.

The protein belongs to the terpene synthase family. Tpsa subfamily. The cofactor is Mg(2+). Requires Mn(2+) as cofactor. Expressed only in young rhizomes. Not detected in leaves, roots and mature rhizomes.

It catalyses the reaction (2E,6E)-farnesyl diphosphate = (S)-beta-bisabolene + diphosphate. Functionally, sesquiterpene synthase involved in the biosynthesis of bisabolene. This chain is (S)-beta-bisabolene synthase (TPS1), found in Zingiber officinale (Ginger).